The chain runs to 222 residues: Cytochrome b6 (222 aa).

Residues 39–59 (IFYCLGGITLVCFIIQFATGF) traverse the membrane as a helical segment. Cys42 provides a ligand contact to heme c. Heme b contacts are provided by His93 and His107. 3 helical membrane passes run 97 to 117 (ASMM…TGGF), 123 to 143 (LTWM…VTGY), and 193 to 213 (LHTF…FLMI). Heme b-binding residues include His194 and His209.

This sequence belongs to the cytochrome b family. PetB subfamily. The 4 large subunits of the cytochrome b6-f complex are cytochrome b6, subunit IV (17 kDa polypeptide, PetD), cytochrome f and the Rieske protein, while the 4 small subunits are PetG, PetL, PetM and PetN. The complex functions as a dimer. Requires heme b as cofactor. Heme c serves as cofactor.

It is found in the cellular thylakoid membrane. Functionally, component of the cytochrome b6-f complex, which mediates electron transfer between photosystem II (PSII) and photosystem I (PSI), cyclic electron flow around PSI, and state transitions. The protein is Cytochrome b6 of Rippkaea orientalis (strain PCC 8801 / RF-1) (Cyanothece sp. (strain PCC 8801)).